A 130-amino-acid chain; its full sequence is Cytidine deaminase (130 aa).

Positions V3 to S130 constitute a CMP/dCMP-type deaminase domain. A substrate-binding site is contributed by N43–E45. Residue C54 participates in Zn(2+) binding. E56 acts as the Proton donor in catalysis. Residues C88 and C91 each coordinate Zn(2+).

The protein belongs to the cytidine and deoxycytidylate deaminase family. Homodimer. Zn(2+) serves as cofactor.

The enzyme catalyses cytidine + H2O + H(+) = uridine + NH4(+). The catalysed reaction is 2'-deoxycytidine + H2O + H(+) = 2'-deoxyuridine + NH4(+). This enzyme scavenges exogenous and endogenous cytidine and 2'-deoxycytidine for UMP synthesis. In Mycoplasma genitalium (strain ATCC 33530 / DSM 19775 / NCTC 10195 / G37) (Mycoplasmoides genitalium), this protein is Cytidine deaminase (cdd).